The following is a 90-amino-acid chain: MNDSVKTSLKRTLVGRVVSNKMDKTVTVLIEHRVKHPIYGKYVVRSKKYHAHDEANTYNEGDLVEIQETRPVSKTKAWTVSRLVEAARVI.

This sequence belongs to the universal ribosomal protein uS17 family. Part of the 30S ribosomal subunit.

In terms of biological role, one of the primary rRNA binding proteins, it binds specifically to the 5'-end of 16S ribosomal RNA. The sequence is that of Small ribosomal subunit protein uS17 from Burkholderia cenocepacia (strain ATCC BAA-245 / DSM 16553 / LMG 16656 / NCTC 13227 / J2315 / CF5610) (Burkholderia cepacia (strain J2315)).